Here is a 302-residue protein sequence, read N- to C-terminus: Phosphoribosylaminoimidazole-succinocarboxamide synthase (302 aa).

The protein belongs to the SAICAR synthetase family.

The catalysed reaction is 5-amino-1-(5-phospho-D-ribosyl)imidazole-4-carboxylate + L-aspartate + ATP = (2S)-2-[5-amino-1-(5-phospho-beta-D-ribosyl)imidazole-4-carboxamido]succinate + ADP + phosphate + 2 H(+). The protein operates within purine metabolism; IMP biosynthesis via de novo pathway; 5-amino-1-(5-phospho-D-ribosyl)imidazole-4-carboxamide from 5-amino-1-(5-phospho-D-ribosyl)imidazole-4-carboxylate: step 1/2. This Cupriavidus taiwanensis (strain DSM 17343 / BCRC 17206 / CCUG 44338 / CIP 107171 / LMG 19424 / R1) (Ralstonia taiwanensis (strain LMG 19424)) protein is Phosphoribosylaminoimidazole-succinocarboxamide synthase.